The chain runs to 188 residues: GMP synthase [glutamine-hydrolyzing] subunit A (188 aa).

One can recognise a Glutamine amidotransferase type-1 domain in the interval 2–188 (KVAVIYFGGQ…FKNFIKICRK (187 aa)). The active-site Nucleophile is the C79. Residues H166 and E168 contribute to the active site.

As to quaternary structure, heterodimer composed of a glutamine amidotransferase subunit (A) and a GMP-binding subunit (B).

The catalysed reaction is XMP + L-glutamine + ATP + H2O = GMP + L-glutamate + AMP + diphosphate + 2 H(+). It participates in purine metabolism; GMP biosynthesis; GMP from XMP (L-Gln route): step 1/1. Its function is as follows. Catalyzes the synthesis of GMP from XMP. This Sulfolobus acidocaldarius (strain ATCC 33909 / DSM 639 / JCM 8929 / NBRC 15157 / NCIMB 11770) protein is GMP synthase [glutamine-hydrolyzing] subunit A.